A 251-amino-acid chain; its full sequence is Probable transcriptional regulatory protein NFA_37020 (251 aa).

The protein belongs to the TACO1 family.

The protein resides in the cytoplasm. The polypeptide is Probable transcriptional regulatory protein NFA_37020 (Nocardia farcinica (strain IFM 10152)).